The following is a 202-amino-acid chain: Nucleoside triphosphate pyrophosphatase (202 aa).

Aspartate 77 serves as the catalytic Proton acceptor.

Belongs to the Maf family. A divalent metal cation is required as a cofactor.

It localises to the cytoplasm. The catalysed reaction is a ribonucleoside 5'-triphosphate + H2O = a ribonucleoside 5'-phosphate + diphosphate + H(+). It catalyses the reaction a 2'-deoxyribonucleoside 5'-triphosphate + H2O = a 2'-deoxyribonucleoside 5'-phosphate + diphosphate + H(+). Functionally, nucleoside triphosphate pyrophosphatase. May have a dual role in cell division arrest and in preventing the incorporation of modified nucleotides into cellular nucleic acids. The chain is Nucleoside triphosphate pyrophosphatase from Rickettsia canadensis (strain McKiel).